Reading from the N-terminus, the 474-residue chain is Probable protein phosphatase 2C 37 (474 aa).

Residues 1–90 (MVMASAGVNM…RDDDGCSSTA (90 aa)) are disordered. Positions 57–77 (LPASSASPSPSPTSSAASSDC) are enriched in low complexity. One can recognise a PPM-type phosphatase domain in the interval 113-470 (AFGSVSLAGR…DNISVVVIDL (358 aa)). Asp-152, Gly-153, and Asp-387 together coordinate Mn(2+). The interval 406–434 (LEDGSPTSGRRAARSGEAASSSAGAPAAA) is disordered. Over residues 420–434 (SGEAASSSAGAPAAA) the composition is skewed to low complexity. Asp-461 contributes to the Mn(2+) binding site.

It belongs to the PP2C family. Requires Mg(2+) as cofactor. The cofactor is Mn(2+).

The catalysed reaction is O-phospho-L-seryl-[protein] + H2O = L-seryl-[protein] + phosphate. The enzyme catalyses O-phospho-L-threonyl-[protein] + H2O = L-threonyl-[protein] + phosphate. The protein is Probable protein phosphatase 2C 37 of Oryza sativa subsp. japonica (Rice).